A 186-amino-acid chain; its full sequence is Zinc finger AN1 domain-containing stress-associated protein 12 (186 aa).

2 AN1-type zinc fingers span residues 10–58 (PDLG…HGSR) and 97–147 (KKKK…INTA). Zn(2+) is bound by residues cysteine 16, cysteine 21, cysteine 31, cysteine 34, cysteine 39, histidine 42, histidine 48, cysteine 50, cysteine 103, cysteine 108, cysteine 120, cysteine 123, cysteine 128, histidine 131, histidine 137, and cysteine 139. Residues 167–186 (KGCGRGSSVSSKSSPSVRSF) form a disordered region. The segment covering 172–186 (GSSVSSKSSPSVRSF) has biased composition (low complexity).

May be involved in environmental stress response. This chain is Zinc finger AN1 domain-containing stress-associated protein 12 (SAP12), found in Arabidopsis thaliana (Mouse-ear cress).